A 230-amino-acid chain; its full sequence is Ribosomal RNA large subunit methyltransferase E (230 aa).

The segment covering 1 to 13 (MSGSGGKGGGRGG) has biased composition (gly residues). The interval 1-22 (MSGSGGKGGGRGGLHVRVKTAK) is disordered. S-adenosyl-L-methionine is bound by residues G81, W83, D100, D116, and D140. Catalysis depends on K180, which acts as the Proton acceptor.

It belongs to the class I-like SAM-binding methyltransferase superfamily. RNA methyltransferase RlmE family.

The protein localises to the cytoplasm. The enzyme catalyses uridine(2552) in 23S rRNA + S-adenosyl-L-methionine = 2'-O-methyluridine(2552) in 23S rRNA + S-adenosyl-L-homocysteine + H(+). Specifically methylates the uridine in position 2552 of 23S rRNA at the 2'-O position of the ribose in the fully assembled 50S ribosomal subunit. The sequence is that of Ribosomal RNA large subunit methyltransferase E from Sphingopyxis alaskensis (strain DSM 13593 / LMG 18877 / RB2256) (Sphingomonas alaskensis).